Consider the following 447-residue polypeptide: GTPase Der (447 aa).

2 consecutive EngA-type G domains span residues 3–167 (PVIA…FAQR) and 181–354 (IRLA…AAAM). Residues 9–16 (GRPNVGKS), 56–60 (DTGGF), 119–122 (NKAE), 187–194 (GRPNVGKS), 234–238 (DTAGI), and 299–302 (NKWD) each bind GTP. The region spanning 355-439 (SNLSTPKLTR…PLRIELRSGK (85 aa)) is the KH-like domain.

The protein belongs to the TRAFAC class TrmE-Era-EngA-EngB-Septin-like GTPase superfamily. EngA (Der) GTPase family. Associates with the 50S ribosomal subunit.

Functionally, GTPase that plays an essential role in the late steps of ribosome biogenesis. The protein is GTPase Der of Herminiimonas arsenicoxydans.